We begin with the raw amino-acid sequence, 310 residues long: Adenylyl-sulfate kinase 4, chloroplastic (310 aa).

A chloroplast-targeting transit peptide spans 1–75; that stretch reads MDVAAMARCV…MAKDESISSR (75 aa). 116-124 provides a ligand contact to ATP; that stretch reads GLSGSGKSS. Substrate is bound by residues Asp-146, Arg-149, Arg-163, Asn-166, 189-190, and Gly-239; that span reads IS. Residue Ser-190 is the Phosphoserine intermediate of the active site.

Belongs to the APS kinase family. As to quaternary structure, homodimer; disulfide-linked. Expressed in root vasculature, root tips, leaf epidermal and guard cells, pollen grains and radicle of immature seeds.

The protein resides in the plastid. It localises to the chloroplast. The enzyme catalyses adenosine 5'-phosphosulfate + ATP = 3'-phosphoadenylyl sulfate + ADP + H(+). Its pathway is sulfur metabolism; hydrogen sulfide biosynthesis; sulfite from sulfate: step 2/3. In terms of biological role, catalyzes the phosphorylation of adenosine 5'-phosphosulfate to 3'-phosphoadenylyl sulfate, which is the activated sulfate form for sulfation reactions. Essential for plant reproduction and viability. The protein is Adenylyl-sulfate kinase 4, chloroplastic (APK4) of Arabidopsis thaliana (Mouse-ear cress).